A 262-amino-acid chain; its full sequence is tRNA pseudouridine synthase A (262 aa).

The active-site Nucleophile is the Asp51. Residue Tyr109 coordinates substrate.

It belongs to the tRNA pseudouridine synthase TruA family. Homodimer.

The enzyme catalyses uridine(38/39/40) in tRNA = pseudouridine(38/39/40) in tRNA. Formation of pseudouridine at positions 38, 39 and 40 in the anticodon stem and loop of transfer RNAs. The polypeptide is tRNA pseudouridine synthase A (Actinobacillus pleuropneumoniae serotype 3 (strain JL03)).